Here is a 604-residue protein sequence, read N- to C-terminus: Phosphoprotein (604 aa).

Disordered stretches follow at residues 1–22 (MESDAKNYQIMDSWEEEPRDKS) and 39–360 (DPQE…EESN). Residues 22-42 (STNISSALNIIEFILSTDPQE) are N0 binding. Polar residues-rich tracts occupy residues 47 to 61 (NDTINTRTQQLSATI) and 74 to 90 (KVSGSTDKNRQSGSSHE). Positions 91–101 (CTTEAKDRNID) are enriched in basic and acidic residues. Residues 129–144 (GSITDSKNGTQNTENI) show a composition bias toward polar residues. Residues 147 to 163 (NEIRKMDKDSIERKMRQ) show a composition bias toward basic and acidic residues. Residues 197–207 (TPDTRSMSVVT) show a composition bias toward polar residues. Over residues 245 to 267 (KGKDWFKKSRDTDNQTSTSDHKP) the composition is skewed to basic and acidic residues. 2 stretches are compositionally biased toward low complexity: residues 277–300 (KTTTTNTDTKGQTETQTESSETQS) and 317–328 (TSTTPPTTTPRS). Basic and acidic residues predominate over residues 330-360 (RTKESIRTNSESKPKTQKTIGKERKDTEESN). Residues 400–470 (VDTASKIDFL…SLISNLKIMT (71 aa)) are multimerization. Residues 424–451 (LIQIQNEMLNLKADLKRMDESHRRLIEN) adopt a coiled-coil conformation. Residues 450–483 (ENQREQLSLITSLISNLKIMTERGGKKDQNESNE) are l protein binding. Residues 585-604 (KSDEEVSELMDMFNEDVNNC) form an interaction with the nucleocapsid (N-RNA) region.

This sequence belongs to the respirovirus P protein family. In terms of assembly, homotetramer. Interacts (via multimerization domain) with polymerase L; this interaction forms the polymerase L-P complex. Interacts (via N-terminus) with N0; this interaction allows P to chaperon N0 to avoid N polymerization before encapsidation. Interacts (via C-terminus) with N-RNA template; this interaction positions the polymerase on the template. Interacts with host PI4KB; this interaction allows P to recruit PI4KB to the viral factories to generate PI4P to facilitate viral replication.

In terms of biological role, essential cofactor of the RNA polymerase L that plays a central role in the transcription and replication by forming the polymerase complex with RNA polymerase L and recruiting L to the genomic N-RNA template for RNA synthesis. Also plays a central role in the encapsidation of nascent RNA chains by forming the encapsidation complex with the nucleocapsid protein N (N-P complex). Acts as a chaperone for newly synthesized free N protein, so-called N0, allowing encapsidation of nascent RNA chains during replication. The nucleoprotein protein N prevents excessive phosphorylation of P, which leads to down-regulation of viral transcription/ replication. Participates, together with N, in the formation of viral factories (viroplasms), which are large inclusions in the host cytoplasm where replication takes place. Recruits host PI4KB and remodel the host endoplasmic reticulum membrane to form viral replication factories. The protein is Phosphoprotein (P/V/D) of Human parainfluenza 3 virus (strain Wash/47885/57) (HPIV-3).